The chain runs to 933 residues: Progesterone receptor (933 aa).

The segment at 1 to 164 is AF3; mediates transcriptional activation; it reads MTELKAKGPR…PATQRVLSPL (164 aa). The segment at 1–256 is disordered; sequence MTELKAKGPR…AAAGGGAAAV (256 aa). A modulating, Pro-Rich region spans residues 1–566; it reads MTELKAKGPR…YSFESLPQKI (566 aa). Residue serine 20 is modified to Phosphoserine. 2 consecutive short sequence motifs (LXXL motif) follow at residues 55 to 59 and 115 to 119; these read LDGLL and LDTLL. Serine 130 and serine 162 each carry phosphoserine. The mediates transcriptional transrepression stretch occupies residues 165–305; it reads MSRSGGKAGD…LATTTMDFIH (141 aa). The short motif at 183-187 is the Nuclear localization signal element; sequence KVLPR. Phosphoserine is present on residues serine 190 and serine 213. Acidic residues predominate over residues 220-231; it reads EVEEEDGSESED. A Phosphoserine; by MAPK1 modification is found at serine 294. Positions 332-380 are disordered; sequence GAGAASAFAPPRSSPSASSTPVAVGDFPDCAYPPDADPKDDAYPLYGDF. The segment covering 335–350 has biased composition (low complexity); that stretch reads AASAFAPPRSSPSASS. Serine 345 carries the post-translational modification Phosphoserine; by MAPK. Lysine 388 participates in a covalent cross-link: Glycyl lysine isopeptide (Lys-Gly) (interchain with G-Cter in SUMO); alternate. A Glycyl lysine isopeptide (Lys-Gly) (interchain with G-Cter in ubiquitin); alternate cross-link involves residue lysine 388. Phosphoserine; by CDK2 is present on serine 400. Residues 415-454 are disordered; it reads PDFPLGPPPPLPPRAPPSRPGEAAVTAAPASASVSSSSSS. Pro residues predominate over residues 418–433; the sequence is PLGPPPPLPPRAPPSR. Over residues 434 to 454 the composition is skewed to low complexity; the sequence is PGEAAVTAAPASASVSSSSSS. Positions 456-546 are AF1; mediates transcriptional activation; that stretch reads STLECILYKA…VYPPYLNYLR (91 aa). Lysine 531 is covalently cross-linked (Glycyl lysine isopeptide (Lys-Gly) (interchain with G-Cter in SUMO)). 2 consecutive NR C4-type zinc fingers follow at residues 567 to 587 and 603 to 627; these read CLICGDEASGCHYGVLTCGSC and CAGRNDCIVDKIRRKNCPACRLRKC. A DNA-binding region (nuclear receptor) is located at residues 567–639; the sequence is CLICGDEASG…AGMVLGGRKF (73 aa). Serine 676 bears the Phosphoserine mark. Residues 679-913 enclose the NR LBD domain; that stretch reads QDIQFFPPLI…EFPEMMSEVI (235 aa). The segment at 687–933 is AF2; mediates transcriptional activation; sequence LINLLVSIEP…MVKPLLFHKK (247 aa). Arginine 766 serves as a coordination point for progesterone.

It belongs to the nuclear hormone receptor family. As to quaternary structure, interacts with SMARD1 and UNC45A. Interacts with CUEDC2; the interaction promotes ubiquitination, decreases sumoylation, and represses transcriptional activity. Interacts with PIAS3; the interaction promotes sumoylation of PR in a hormone-dependent manner, inhibits DNA-binding, and alters nuclear export. Interacts with SP1; the interaction requires ligand-induced phosphorylation on Ser-345 by ERK1/2-MAPK. Interacts with PRMT2. Interacts with NCOA2 and NCOA1. Interacts with KLF9. Interacts with GTF2B. In terms of processing, phosphorylated on multiple serine sites. Several of these sites are hormone-dependent. Phosphorylation on Ser-294 is highly hormone-dependent and modulates ubiquitination and sumoylation on Lys-388. Phosphorylation on Ser-345 also requires induction by hormone. Basal phosphorylation on Ser-162, Ser-190 and Ser-400 is increased in response to progesterone and can be phosphorylated in vitro by the CDK2-A1 complex. Increased levels of phosphorylation on Ser-400 also in the presence of EGF, heregulin, IGF, PMA and FBS. Phosphorylation at this site by CDK2 is ligand-independent, and increases nuclear translocation and transcriptional activity. Phosphorylation at Ser-162 and Ser-294, but not at Ser-190, is impaired during the G(2)/M phase of the cell cycle. Phosphorylation on Ser-345 by ERK1/2 MAPK is required for interaction with SP1. Sumoylation is hormone-dependent and represses transcriptional activity. Sumoylation on all three sites is enhanced by PIAS3. Desumoylated by SENP1. Sumoylation on Lys-388, the main site of sumoylation, is repressed by ubiquitination on the same site, and modulated by phosphorylation at Ser-294. Post-translationally, ubiquitination is hormone-dependent and represses sumoylation on the same site. Promoted by MAPK-mediated phosphorylation on Ser-294. Ubiquitinated by UBR5, leading to its degradation: UBR5 specifically recognizes and binds ligand-bound PGR when it is not associated with coactivators (NCOAs). In presence of NCOAs, the UBR5-degron is not accessible, preventing its ubiquitination and degradation. In terms of processing, palmitoylated by ZDHHC7 and ZDHHC21. Palmitoylation is required for plasma membrane targeting and for rapid intracellular signaling via ERK and AKT kinases and cAMP generation.

Its subcellular location is the nucleus. It is found in the cytoplasm. The steroid hormones and their receptors are involved in the regulation of eukaryotic gene expression and affect cellular proliferation and differentiation in target tissues. Transcriptional activator of several progesteron-dependent promoters in a variety of cell types. Involved in activation of SRC-dependent MAPK signaling on hormone stimulation. This is Progesterone receptor (PGR) from Chlorocebus aethiops (Green monkey).